The sequence spans 1267 residues: DNA-directed RNA polymerase subunit beta (1267 aa).

It belongs to the RNA polymerase beta chain family. In terms of assembly, the RNAP catalytic core consists of 2 alpha, 1 beta, 1 beta' and 1 omega subunit. When a sigma factor is associated with the core the holoenzyme is formed, which can initiate transcription.

The catalysed reaction is RNA(n) + a ribonucleoside 5'-triphosphate = RNA(n+1) + diphosphate. DNA-dependent RNA polymerase catalyzes the transcription of DNA into RNA using the four ribonucleoside triphosphates as substrates. The sequence is that of DNA-directed RNA polymerase subunit beta (rpoB) from Carsonella ruddii (strain PV).